We begin with the raw amino-acid sequence, 296 residues long: Homeobox protein SIX2 (296 aa).

The segment at residues 124 to 183 (GEETSYCFKEKSRSVLREWYAHNPYPSPREKRELAEATGLTTTQVSNWFKNRRQRDRAAE) is a DNA-binding region (homeobox). Residues 168 to 284 (VSNWFKNRRQ…HHHSLQDSIL (117 aa)) are disordered. Residues 179-190 (DRAAEAKERENS) are compositionally biased toward basic and acidic residues. Low complexity-rich tracts occupy residues 191-206 (ENSN…SSLN) and 228-237 (HSSSSPALLL). The segment covering 254 to 264 (PPGPSAVPVPV) has biased composition (pro residues).

The protein belongs to the SIX/Sine oculis homeobox family. Interacts with TCF7L2; in a canonical Wnt signaling independent manner; prevents transcription of differentiation genes in cap mesenchyme. Interacts with OSR1; form a strong repressor complex with TCF7L2, TLE2 and TLE3 to prevent the activation of Wnt/beta-catenin target genes in the cap mesenchyme. Interacts with HOXA11, EYA1 and EYA3. As to expression, expressed in phalangeal tendons, in smooth muscle and in head and body mesenchyme.

It is found in the nucleus. In terms of biological role, transcription factor that plays an important role in the development of several organs, including kidney, skull and stomach. During kidney development, maintains cap mesenchyme multipotent nephron progenitor cells in an undifferentiated state by opposing the inductive signals emanating from the ureteric bud and cooperates with WNT9B to promote renewing progenitor cells proliferation. Acts through its interaction with TCF7L2 and OSR1 in a canonical Wnt signaling independent manner preventing transcription of differentiation genes in cap mesenchyme such as WNT4. Also acts independently of OSR1 to activate expression of many cap mesenchyme genes, including itself, GDNF and OSR1. During craniofacial development plays a role in growth and elongation of the cranial base through regulation of chondrocyte differentiation. During stomach organogenesis, controls pyloric sphincter formation and mucosal growth through regulation of a gene network including NKX2-5, BMPR1B, BMP4, SOX9 and GREM1. During branchial arch development, acts to mediate HOXA2 control over the insulin-like growth factor pathway. May also be involved in limb tendon and ligament development. Plays a role in cell proliferation and migration. The sequence is that of Homeobox protein SIX2 (Six2) from Mus musculus (Mouse).